The sequence spans 101 residues: Replication restart protein PriB (101 aa).

Residues 1 to 101 (MTTNNLVLSG…IHAENVELKT (101 aa)) enclose the SSB domain.

Belongs to the PriB family. As to quaternary structure, homodimer. Interacts with PriA and DnaT. Component of the replication restart primosome. Primosome assembly occurs via a 'hand-off' mechanism. PriA binds to replication forks, subsequently PriB then DnaT bind; DnaT then displaces ssDNA to generate the helicase loading substrate.

Involved in the restart of stalled replication forks, which reloads the replicative helicase on sites other than the origin of replication; the PriA-PriB pathway is the major replication restart pathway. During primosome assembly it facilitates complex formation between PriA and DnaT on DNA; stabilizes PriA on DNA. Stimulates the DNA unwinding activity of PriA helicase. The protein is Replication restart protein PriB of Shewanella oneidensis (strain ATCC 700550 / JCM 31522 / CIP 106686 / LMG 19005 / NCIMB 14063 / MR-1).